A 215-amino-acid polypeptide reads, in one-letter code: Protein LURP-one-related 16 (215 aa).

Glycine 2 is lipidated: N-myristoyl glycine.

It belongs to the LOR family.

Might be related to the phospholipid scramblase and tubby-like superfamily of membrane tethered transcription factors. The polypeptide is Protein LURP-one-related 16 (Arabidopsis thaliana (Mouse-ear cress)).